The following is a 116-amino-acid chain: Peptidyl-tRNA hydrolase (116 aa).

Belongs to the PTH2 family.

The protein resides in the cytoplasm. It catalyses the reaction an N-acyl-L-alpha-aminoacyl-tRNA + H2O = an N-acyl-L-amino acid + a tRNA + H(+). The natural substrate for this enzyme may be peptidyl-tRNAs which drop off the ribosome during protein synthesis. The protein is Peptidyl-tRNA hydrolase of Methanococcus maripaludis (strain C6 / ATCC BAA-1332).